The following is a 324-amino-acid chain: NADH-quinone oxidoreductase subunit H 2 (324 aa).

9 consecutive transmembrane segments (helical) span residues 1–21 (MIGM…LLVV), 77–97 (ILAP…VAFG), 109–129 (VMFL…GALA), 147–167 (LGYE…AGSL), 179–199 (VWFV…GVAA), 214–234 (LVAG…FLGE), 238–258 (VLLV…GPVW), 263–283 (LPGP…FIWI), and 298–318 (FAWK…GLIV).

This sequence belongs to the complex I subunit 1 family. As to quaternary structure, NDH-1 is composed of 14 different subunits. Subunits NuoA, H, J, K, L, M, N constitute the membrane sector of the complex.

Its subcellular location is the cell inner membrane. The catalysed reaction is a quinone + NADH + 5 H(+)(in) = a quinol + NAD(+) + 4 H(+)(out). In terms of biological role, NDH-1 shuttles electrons from NADH, via FMN and iron-sulfur (Fe-S) centers, to quinones in the respiratory chain. The immediate electron acceptor for the enzyme in this species is believed to be ubiquinone. Couples the redox reaction to proton translocation (for every two electrons transferred, four hydrogen ions are translocated across the cytoplasmic membrane), and thus conserves the redox energy in a proton gradient. This subunit may bind ubiquinone. The protein is NADH-quinone oxidoreductase subunit H 2 of Rhodopseudomonas palustris (strain BisB18).